The following is a 128-amino-acid chain: Probable prefoldin subunit 6 (128 aa).

This sequence belongs to the prefoldin subunit beta family. As to quaternary structure, heterohexamer of two PFD-alpha type and four PFD-beta type subunits.

The protein resides in the cytoplasm. Its function is as follows. Binds specifically to cytosolic chaperonin (c-CPN) and transfers target proteins to it. Binds to nascent polypeptide chain and promotes folding in an environment in which there are many competing pathways for nonnative proteins. Required for positioning of the mitotic spindle. The chain is Probable prefoldin subunit 6 from Caenorhabditis briggsae.